Reading from the N-terminus, the 442-residue chain is tRNA modification GTPase MnmE (442 aa).

Residues arginine 21, glutamate 79, and lysine 118 each coordinate (6S)-5-formyl-5,6,7,8-tetrahydrofolate. The TrmE-type G domain occupies 214–367; the sequence is GFKIAIVGKP…LKEELQNYLN (154 aa). Asparagine 224 contributes to the K(+) binding site. GTP contacts are provided by residues 224–229, 243–249, and 268–271; these read NVGKSS, SDIAGTT, and DTAG. Serine 228 contributes to the Mg(2+) binding site. 3 residues coordinate K(+): serine 243, isoleucine 245, and threonine 248. Mg(2+) is bound at residue threonine 249. Lysine 442 contacts (6S)-5-formyl-5,6,7,8-tetrahydrofolate.

The protein belongs to the TRAFAC class TrmE-Era-EngA-EngB-Septin-like GTPase superfamily. TrmE GTPase family. As to quaternary structure, homodimer. Heterotetramer of two MnmE and two MnmG subunits. K(+) is required as a cofactor.

The protein resides in the cytoplasm. Its function is as follows. Exhibits a very high intrinsic GTPase hydrolysis rate. Involved in the addition of a carboxymethylaminomethyl (cmnm) group at the wobble position (U34) of certain tRNAs, forming tRNA-cmnm(5)s(2)U34. In Campylobacter jejuni subsp. jejuni serotype O:23/36 (strain 81-176), this protein is tRNA modification GTPase MnmE.